The chain runs to 728 residues: Catalase-peroxidase 1 (728 aa).

Positions 91–218 form a cross-link, tryptophyl-tyrosyl-methioninium (Trp-Tyr) (with M-244); that stretch reads WHSAGTYRTA…LAAVQMGLIY (128 aa). His-92 serves as the catalytic Proton acceptor. The segment at residues 218 to 244 is a cross-link (tryptophyl-tyrosyl-methioninium (Tyr-Met) (with W-91)); the sequence is YVNPEGPDGNPDPVAAAHDIRETFARM. His-259 lines the heme b pocket.

This sequence belongs to the peroxidase family. Peroxidase/catalase subfamily. In terms of assembly, homodimer or homotetramer. Heme b is required as a cofactor. In terms of processing, formation of the three residue Trp-Tyr-Met cross-link is important for the catalase, but not the peroxidase activity of the enzyme.

The catalysed reaction is H2O2 + AH2 = A + 2 H2O. The enzyme catalyses 2 H2O2 = O2 + 2 H2O. In terms of biological role, bifunctional enzyme with both catalase and broad-spectrum peroxidase activity. The polypeptide is Catalase-peroxidase 1 (Burkholderia cenocepacia (strain ATCC BAA-245 / DSM 16553 / LMG 16656 / NCTC 13227 / J2315 / CF5610) (Burkholderia cepacia (strain J2315))).